A 169-amino-acid polypeptide reads, in one-letter code: Ureidoglycolate lyase (169 aa).

Belongs to the ureidoglycolate lyase family. As to quaternary structure, homodimer. Requires Ni(2+) as cofactor.

It carries out the reaction (S)-ureidoglycolate = urea + glyoxylate. It participates in nitrogen metabolism; (S)-allantoin degradation. Functionally, catalyzes the catabolism of the allantoin degradation intermediate (S)-ureidoglycolate, generating urea and glyoxylate. Involved in the utilization of allantoin as nitrogen source. This is Ureidoglycolate lyase from Pseudomonas aeruginosa (strain LESB58).